Reading from the N-terminus, the 399-residue chain is Probable sugar efflux transporter (399 aa).

Helical transmembrane passes span 15–35 (VVTL…PVGL), 50–70 (VGMM…PFML), 81–101 (LIGL…AWSF), 103–123 (VLVI…SITS), 136–156 (AQAL…GIPI), 168–188 (MTFL…VKLL), 209–229 (PALV…YTAY), 246–266 (FATV…ILFG), 273–293 (ASGL…LLLP), 301–321 (LMLL…GMQV), 333–353 (VAMS…ALVG), and 364–384 (SIGY…LMIF).

It belongs to the major facilitator superfamily. SotB (TC 2.A.1.2) family.

The protein localises to the cell inner membrane. Its function is as follows. Involved in the efflux of sugars. The physiological role may be the reduction of the intracellular concentration of toxic sugars or sugar metabolites. The chain is Probable sugar efflux transporter from Klebsiella pneumoniae (strain 342).